The following is a 306-amino-acid chain: Non-specific ribonucleoside hydrolase RihC (306 aa).

Histidine 235 is a catalytic residue.

Belongs to the IUNH family. RihC subfamily.

Its function is as follows. Hydrolyzes both purine and pyrimidine ribonucleosides with a broad-substrate specificity. The polypeptide is Non-specific ribonucleoside hydrolase RihC (Salmonella enteritidis PT4 (strain P125109)).